The following is a 433-amino-acid chain: Glucose-6-phosphate isomerase (433 aa).

Glutamate 285 serves as the catalytic Proton donor. Active-site residues include histidine 306 and lysine 421.

This sequence belongs to the GPI family.

Its subcellular location is the cytoplasm. The catalysed reaction is alpha-D-glucose 6-phosphate = beta-D-fructose 6-phosphate. It functions in the pathway carbohydrate biosynthesis; gluconeogenesis. Its pathway is carbohydrate degradation; glycolysis; D-glyceraldehyde 3-phosphate and glycerone phosphate from D-glucose: step 2/4. Catalyzes the reversible isomerization of glucose-6-phosphate to fructose-6-phosphate. The sequence is that of Glucose-6-phosphate isomerase from Mycoplasma mobile (strain ATCC 43663 / 163K / NCTC 11711) (Mesomycoplasma mobile).